The sequence spans 403 residues: MTELKLNPYFGEYGGMYVPQILVPALKQLETAFVEAQQDESFIAEFTDLLKNYAGRPTALTLTRNLSPNPLVKIYLKREDLLHGGAHKTNQVLGQALLAKRMGKKEIIAETGAGQHGVATALACALLGLKCKVYMGAKDIERQSPNVFRMKLMGAEVIPVTSGSSTLKDACNEAMRDWSASYDKAHYLLGTAAGPHPFPTIVREFQRMIGEETKKQILEKEGRLPDAVIACVGGGSNAIGMFADFIDEPSVELIGVEPAGKGIDTPMHGAPLKHGKTGIFFGMKSPLMQNSDGQIEESYSVSAGLDFPSVGPQHAHLNAIGRARYESATDDEALEMFQTLARCEGIIPALESAHALAYAVRMAKEATKETILVVNLSGRGDKDIFTVADILEAKQKQQESGNE.

The residue at position 88 (Lys-88) is an N6-(pyridoxal phosphate)lysine.

This sequence belongs to the TrpB family. As to quaternary structure, tetramer of two alpha and two beta chains. The cofactor is pyridoxal 5'-phosphate.

It carries out the reaction (1S,2R)-1-C-(indol-3-yl)glycerol 3-phosphate + L-serine = D-glyceraldehyde 3-phosphate + L-tryptophan + H2O. It participates in amino-acid biosynthesis; L-tryptophan biosynthesis; L-tryptophan from chorismate: step 5/5. In terms of biological role, the beta subunit is responsible for the synthesis of L-tryptophan from indole and L-serine. The sequence is that of Tryptophan synthase beta chain from Shewanella frigidimarina (strain NCIMB 400).